Consider the following 181-residue polypeptide: Inner membrane-spanning protein YciB (181 aa).

Helical transmembrane passes span 10 to 30 (LVIFFAVYKFFDIYIASGALI), 50 to 70 (MHLITFAMVTVFGTLTLVFHD), 72 to 92 (AFIKWKVTIIYALFALALGIS), 118 to 138 (ITWYWVIFFATCGLVNIYVAF), and 148 to 168 (FKVFGLTALTLVNTVITVFYL).

Belongs to the YciB family.

It is found in the cell inner membrane. Its function is as follows. Plays a role in cell envelope biogenesis, maintenance of cell envelope integrity and membrane homeostasis. This Shewanella putrefaciens (strain CN-32 / ATCC BAA-453) protein is Inner membrane-spanning protein YciB.